A 759-amino-acid polypeptide reads, in one-letter code: Phosphoribosylformylglycinamidine synthase subunit PurL (759 aa).

The active site involves histidine 61. Residues tyrosine 64 and lysine 105 each contribute to the ATP site. Glutamate 107 contacts Mg(2+). Substrate-binding positions include 108-111 (SHNH) and arginine 130. Catalysis depends on histidine 109, which acts as the Proton acceptor. Aspartate 131 contacts Mg(2+). Glutamine 260 lines the substrate pocket. Position 288 (aspartate 288) interacts with Mg(2+). Residue 332–334 (ESQ) coordinates substrate. ATP contacts are provided by aspartate 520 and glycine 557. Asparagine 558 is a binding site for Mg(2+). Serine 560 provides a ligand contact to substrate.

Belongs to the FGAMS family. Monomer. Part of the FGAM synthase complex composed of 1 PurL, 1 PurQ and 2 PurS subunits.

The protein resides in the cytoplasm. The catalysed reaction is N(2)-formyl-N(1)-(5-phospho-beta-D-ribosyl)glycinamide + L-glutamine + ATP + H2O = 2-formamido-N(1)-(5-O-phospho-beta-D-ribosyl)acetamidine + L-glutamate + ADP + phosphate + H(+). The protein operates within purine metabolism; IMP biosynthesis via de novo pathway; 5-amino-1-(5-phospho-D-ribosyl)imidazole from N(2)-formyl-N(1)-(5-phospho-D-ribosyl)glycinamide: step 1/2. Functionally, part of the phosphoribosylformylglycinamidine synthase complex involved in the purines biosynthetic pathway. Catalyzes the ATP-dependent conversion of formylglycinamide ribonucleotide (FGAR) and glutamine to yield formylglycinamidine ribonucleotide (FGAM) and glutamate. The FGAM synthase complex is composed of three subunits. PurQ produces an ammonia molecule by converting glutamine to glutamate. PurL transfers the ammonia molecule to FGAR to form FGAM in an ATP-dependent manner. PurS interacts with PurQ and PurL and is thought to assist in the transfer of the ammonia molecule from PurQ to PurL. This is Phosphoribosylformylglycinamidine synthase subunit PurL from Thermoplasma acidophilum (strain ATCC 25905 / DSM 1728 / JCM 9062 / NBRC 15155 / AMRC-C165).